The sequence spans 468 residues: PTS system mannitol-specific EIICB component (468 aa).

At 1–25 the chain is on the cytoplasmic side; the sequence is MNNQPSFRARVQKFGSFLSGMIMPN. The region spanning 14–344 is the PTS EIIC type-2 domain; that stretch reads FGSFLSGMIM…ILKTSKATAE (331 aa). Residues 26 to 47 form a helical membrane-spanning segment; it reads IGAFIAWGLITALFIPTGWWPN. The Extracellular portion of the chain corresponds to 48–51; sequence EQLA. The helical transmembrane segment at 52-72 threads the bilayer; it reads ELVGPMITYLLPLLIGYTGGK. Residues 73–135 lie on the Cytoplasmic side of the membrane; sequence MIYDVRGGVV…SGFEMLVNNF (63 aa). The chain crosses the membrane as a helical span at residues 136–157; the sequence is SAGILAAILAIVAFLGIGPVVV. Over 158 to 166 the chain is Extracellular; sequence SFSNVLASG. A helical membrane pass occupies residues 167-187; sequence VEVIIGAGLLPLASIFIEPAK. Residues 188–274 are Cytoplasmic-facing; sequence VLFLNNAINH…ILMKPTLILA (87 aa). Residues 275–294 form a helical membrane-spanning segment; it reads VIAGGMSGVFTFVLFNAGLV. Topologically, residues 295-314 are extracellular; that stretch reads AVPSPGSIFALLAMTPRGEY. The chain crosses the membrane as a helical span at residues 315–336; that stretch reads AGVLAGVIIATVVSFVIASIIL. The Cytoplasmic segment spans residues 337–468; sequence KTSKATAEDL…YDELVNRLKS (132 aa). The PTS EIIB type-2 domain occupies 380-468; sequence NKIIFACDAG…YDELVNRLKS (89 aa). The active-site Phosphocysteine intermediate; for EIIB activity is Cys386. A Phosphocysteine; by EIIA modification is found at Cys386.

Homodimer.

Its subcellular location is the cell membrane. It catalyses the reaction D-mannitol(out) + N(pros)-phospho-L-histidyl-[protein] = D-mannitol 1-phosphate(in) + L-histidyl-[protein]. Its function is as follows. The phosphoenolpyruvate-dependent sugar phosphotransferase system (sugar PTS), a major carbohydrate active transport system, catalyzes the phosphorylation of incoming sugar substrates concomitantly with their translocation across the cell membrane. The enzyme II CmtAB PTS system is involved in D-mannitol transport. This Halalkalibacterium halodurans (strain ATCC BAA-125 / DSM 18197 / FERM 7344 / JCM 9153 / C-125) (Bacillus halodurans) protein is PTS system mannitol-specific EIICB component (mtlA).